Consider the following 187-residue polypeptide: Protein GrpE (187 aa).

The span at 1-11 (MTDSSNEHETE) shows a compositional bias: basic and acidic residues. The tract at residues 1–23 (MTDSSNEHETENPSVPNPDNEIQ) is disordered.

Belongs to the GrpE family. As to quaternary structure, homodimer.

It localises to the cytoplasm. Functionally, participates actively in the response to hyperosmotic and heat shock by preventing the aggregation of stress-denatured proteins, in association with DnaK and GrpE. It is the nucleotide exchange factor for DnaK and may function as a thermosensor. Unfolded proteins bind initially to DnaJ; upon interaction with the DnaJ-bound protein, DnaK hydrolyzes its bound ATP, resulting in the formation of a stable complex. GrpE releases ADP from DnaK; ATP binding to DnaK triggers the release of the substrate protein, thus completing the reaction cycle. Several rounds of ATP-dependent interactions between DnaJ, DnaK and GrpE are required for fully efficient folding. In Chlamydia felis (strain Fe/C-56) (Chlamydophila felis), this protein is Protein GrpE.